A 304-amino-acid chain; its full sequence is UDP-3-O-acyl-N-acetylglucosamine deacetylase (304 aa).

Zn(2+) is bound by residues His79, His238, and Asp242. His265 functions as the Proton donor in the catalytic mechanism.

It belongs to the LpxC family. Zn(2+) is required as a cofactor.

It carries out the reaction a UDP-3-O-[(3R)-3-hydroxyacyl]-N-acetyl-alpha-D-glucosamine + H2O = a UDP-3-O-[(3R)-3-hydroxyacyl]-alpha-D-glucosamine + acetate. Its pathway is glycolipid biosynthesis; lipid IV(A) biosynthesis; lipid IV(A) from (3R)-3-hydroxytetradecanoyl-[acyl-carrier-protein] and UDP-N-acetyl-alpha-D-glucosamine: step 2/6. Catalyzes the hydrolysis of UDP-3-O-myristoyl-N-acetylglucosamine to form UDP-3-O-myristoylglucosamine and acetate, the committed step in lipid A biosynthesis. This is UDP-3-O-acyl-N-acetylglucosamine deacetylase from Chromobacterium violaceum (strain ATCC 12472 / DSM 30191 / JCM 1249 / CCUG 213 / NBRC 12614 / NCIMB 9131 / NCTC 9757 / MK).